The primary structure comprises 355 residues: UDP-N-acetylglucosamine--N-acetylmuramyl-(pentapeptide) pyrophosphoryl-undecaprenol N-acetylglucosamine transferase (355 aa).

Residues 13–15, Asn-125, Arg-162, Ser-190, Ile-244, and Gln-289 contribute to the UDP-N-acetyl-alpha-D-glucosamine site; that span reads TGG.

The protein belongs to the glycosyltransferase 28 family. MurG subfamily.

It localises to the cell inner membrane. It carries out the reaction di-trans,octa-cis-undecaprenyl diphospho-N-acetyl-alpha-D-muramoyl-L-alanyl-D-glutamyl-meso-2,6-diaminopimeloyl-D-alanyl-D-alanine + UDP-N-acetyl-alpha-D-glucosamine = di-trans,octa-cis-undecaprenyl diphospho-[N-acetyl-alpha-D-glucosaminyl-(1-&gt;4)]-N-acetyl-alpha-D-muramoyl-L-alanyl-D-glutamyl-meso-2,6-diaminopimeloyl-D-alanyl-D-alanine + UDP + H(+). Its pathway is cell wall biogenesis; peptidoglycan biosynthesis. Functionally, cell wall formation. Catalyzes the transfer of a GlcNAc subunit on undecaprenyl-pyrophosphoryl-MurNAc-pentapeptide (lipid intermediate I) to form undecaprenyl-pyrophosphoryl-MurNAc-(pentapeptide)GlcNAc (lipid intermediate II). This is UDP-N-acetylglucosamine--N-acetylmuramyl-(pentapeptide) pyrophosphoryl-undecaprenol N-acetylglucosamine transferase from Neisseria meningitidis serogroup C (strain 053442).